A 157-amino-acid polypeptide reads, in one-letter code: Thiocyanate hydrolase subunit beta (157 aa).

In terms of assembly, heterododecamer consisting of 4 alpha, 4 beta, and 4 gamma subunits.

The enzyme catalyses thiocyanate + H2O + 2 H(+) = carbonyl sulfide + NH4(+). The protein operates within organosulfur degradation; thiocyanate degradation. Functionally, involved in the degradation of thiocyanate. In Thiobacillus thioparus, this protein is Thiocyanate hydrolase subunit beta (scnB).